Consider the following 282-residue polypeptide: MGQIINGKEVALKIKEEIKTFVEERKNNKLRIPKIASILVGNDGGSIYYMSSQEKVANSLGVDFLKIILEENVTDDDVINEIHKLNDDVNVQGIMLQLPLPKHLNEKKIIKEISVKKDIDCLTFESQGKLYMGEKGFLPCTPNSVVTLIKSLNVDITGKEVVVLGRSNIVGKPVAQLLLNENATVTICHSKTKNLKEVCSKADILVVAIGKPKFIDEEYIKENAIVIDVGTSSFEGKITGDVNFDKVIDKASFLTPVPGGVGALTTTLLIKNSCEALKEYED.

NADP(+) is bound by residues 165 to 167 (GRS), serine 190, and threonine 231.

This sequence belongs to the tetrahydrofolate dehydrogenase/cyclohydrolase family. In terms of assembly, homodimer.

It carries out the reaction (6R)-5,10-methylene-5,6,7,8-tetrahydrofolate + NADP(+) = (6R)-5,10-methenyltetrahydrofolate + NADPH. The catalysed reaction is (6R)-5,10-methenyltetrahydrofolate + H2O = (6R)-10-formyltetrahydrofolate + H(+). The protein operates within one-carbon metabolism; tetrahydrofolate interconversion. Its function is as follows. Catalyzes the oxidation of 5,10-methylenetetrahydrofolate to 5,10-methenyltetrahydrofolate and then the hydrolysis of 5,10-methenyltetrahydrofolate to 10-formyltetrahydrofolate. The polypeptide is Bifunctional protein FolD (Clostridium botulinum (strain Alaska E43 / Type E3)).